The primary structure comprises 213 residues: MSKLRTEDMSHPVKPLRSFLIQDILSHMGPGSKEKSLGFPKTDQDQDSSLRDTEEKYASEKLQSSSQPAEIHHSHMEADENLELDTAQPITAVENKLAKQQQKRSRAAFSHSQVIELERKFSSQKYLSAPERAQLAKSLKLTETQVKIWFQNRRYKTKRKQLATDMEEVEKSSAHPAQCRDTNISRTSLLSFYQNYQRYPYLYYLAGWPAPLW.

The disordered stretch occupies residues 24–72; the sequence is ILSHMGPGSKEKSLGFPKTDQDQDSSLRDTEEKYASEKLQSSSQPAEIH. The segment covering 32–59 has biased composition (basic and acidic residues); sequence SKEKSLGFPKTDQDQDSSLRDTEEKYAS. A DNA-binding region (homeobox) is located at residues 102-161; it reads QKRSRAAFSHSQVIELERKFSSQKYLSAPERAQLAKSLKLTETQVKIWFQNRRYKTKRKQ.

This sequence belongs to the NK-3 homeobox family. In terms of tissue distribution, expressed in the muscle layer of embryonic somites. In tailbud embryos, expressed throughout the entire myotome but at the mid-tailbud stage (stage 32), expression becomes restricted to the outer periphery of the somite so that by the tadpole stage only the outer, type I cells show expression. Also expressed in the dorsal cement gland and in the myocardial layer of the developing heart. In all tissues, expression begins after terminal differentiation.

Its subcellular location is the nucleus. Functionally, may regulate cell proliferation in a tissue-specific manner. The chain is Homeobox protein koza from Xenopus laevis (African clawed frog).